Reading from the N-terminus, the 132-residue chain is ATP synthase epsilon chain (132 aa).

It belongs to the ATPase epsilon chain family. F-type ATPases have 2 components, CF(1) - the catalytic core - and CF(0) - the membrane proton channel. CF(1) has five subunits: alpha(3), beta(3), gamma(1), delta(1), epsilon(1). CF(0) has four main subunits: a, b, b' and c.

Its subcellular location is the cellular chromatophore membrane. Its function is as follows. Produces ATP from ADP in the presence of a proton gradient across the membrane. The polypeptide is ATP synthase epsilon chain (atpC) (Rhodobacter capsulatus (Rhodopseudomonas capsulata)).